Here is a 282-residue protein sequence, read N- to C-terminus: 2-dehydro-3-deoxyphosphooctonate aldolase (282 aa).

This sequence belongs to the KdsA family.

The protein resides in the cytoplasm. It carries out the reaction D-arabinose 5-phosphate + phosphoenolpyruvate + H2O = 3-deoxy-alpha-D-manno-2-octulosonate-8-phosphate + phosphate. Its pathway is carbohydrate biosynthesis; 3-deoxy-D-manno-octulosonate biosynthesis; 3-deoxy-D-manno-octulosonate from D-ribulose 5-phosphate: step 2/3. It participates in bacterial outer membrane biogenesis; lipopolysaccharide biosynthesis. The sequence is that of 2-dehydro-3-deoxyphosphooctonate aldolase from Shewanella amazonensis (strain ATCC BAA-1098 / SB2B).